We begin with the raw amino-acid sequence, 134 residues long: Profilin-2 (134 aa).

Cysteines 13 and 118 form a disulfide. The Involved in PIP2 interaction motif lies at Ala-84–Thr-100. At Thr-114 the chain carries Phosphothreonine.

It belongs to the profilin family. Post-translationally, phosphorylated by MAP kinases.

Its subcellular location is the cytoplasm. The protein localises to the cytoskeleton. The polypeptide is Profilin-2 (Olea europaea (Common olive)).